Here is a 358-residue protein sequence, read N- to C-terminus: Vesicular integral-membrane protein VIP36 (358 aa).

Positions 1 to 46 are cleaved as a signal peptide; the sequence is MAAEAWLWRWGWGWGQRCPGRPGLPGPGPSPTTFLHLLLLLGPVAA. The Lumenal portion of the chain corresponds to 47–324; that stretch reads DITDGNSEHL…FRNGPLTGWR (278 aa). The region spanning 54–278 is the L-type lectin-like domain; the sequence is EHLKREHSLI…DIISIKLFQL (225 aa). The a carbohydrate site is built by Ser98 and Asp133. The Ca(2+) site is built by Asp164, Tyr166, and Asn168. Residue 166–168 coordinates a carbohydrate; that stretch reads YPN. An N-linked (GlcNAc...) asparagine glycan is attached at Asn185. A carbohydrate is bound at residue His192. Asp195 is a Ca(2+) binding site. Cys204 and Cys241 are joined by a disulfide. A carbohydrate is bound at residue 262 to 264; the sequence is GDL. The helical transmembrane segment at 325-347 threads the bilayer; the sequence is VFLLLLCALLGVVVCAVVGAVVF. Over 348–358 the chain is Cytoplasmic; the sequence is QKRQERNKRFY.

Requires Ca(2+) as cofactor.

Its subcellular location is the golgi apparatus membrane. Functionally, plays a role as an intracellular lectin in the early secretory pathway. Interacts with N-acetyl-D-galactosamine and high-mannose type glycans and may also bind to O-linked glycans. Involved in the transport and sorting of glycoproteins carrying high mannose-type glycans. This Mus musculus (Mouse) protein is Vesicular integral-membrane protein VIP36 (Lman2).